A 134-amino-acid polypeptide reads, in one-letter code: Phosphoribosyl-ATP pyrophosphatase 2 (134 aa).

It belongs to the PRA-PH family.

It is found in the cytoplasm. It carries out the reaction 1-(5-phospho-beta-D-ribosyl)-ATP + H2O = 1-(5-phospho-beta-D-ribosyl)-5'-AMP + diphosphate + H(+). The protein operates within amino-acid biosynthesis; L-histidine biosynthesis; L-histidine from 5-phospho-alpha-D-ribose 1-diphosphate: step 2/9. The chain is Phosphoribosyl-ATP pyrophosphatase 2 (hisE2) from Bradyrhizobium diazoefficiens (strain JCM 10833 / BCRC 13528 / IAM 13628 / NBRC 14792 / USDA 110).